Reading from the N-terminus, the 169-residue chain is Large ribosomal subunit protein uL10 (169 aa).

Belongs to the universal ribosomal protein uL10 family. As to quaternary structure, part of the ribosomal stalk of the 50S ribosomal subunit. The N-terminus interacts with L11 and the large rRNA to form the base of the stalk. The C-terminus forms an elongated spine to which L12 dimers bind in a sequential fashion forming a multimeric L10(L12)X complex.

Forms part of the ribosomal stalk, playing a central role in the interaction of the ribosome with GTP-bound translation factors. The polypeptide is Large ribosomal subunit protein uL10 (Rickettsia africae (strain ESF-5)).